A 462-amino-acid polypeptide reads, in one-letter code: 2-amino-5-chloromuconic acid deaminase (462 aa).

Active-site charge relay system residues include K79 and S156. S180 (acyl-ester intermediate) is an active-site residue.

The protein belongs to the amidase family.

It carries out the reaction (2Z,4E)-2-aminomuconate + H2O = (3E)-2-oxohex-3-enedioate + NH4(+). Its pathway is xenobiotic degradation; nitrobenzene degradation. It functions in the pathway xenobiotic degradation; 4-chloronitrobenzene degradation. Involved in the biodegradation of nitroaromatic and chlorinated nitroaromatic compounds. Catalyzes the conversion of 2-amino-5-chloromuconic acid into 2-hydroxy-5-chloromuconic acid and ammonia. Also able to catalyze the transformation of 2-aminomuconic acid into 2-hydroxymuconic acid. This is 2-amino-5-chloromuconic acid deaminase from Comamonas testosteroni (Pseudomonas testosteroni).